The sequence spans 228 residues: 2,3-bisphosphoglycerate-dependent phosphoglycerate mutase (228 aa).

Substrate is bound by residues 8–15 (RHGQSQWN), 21–22 (TG), Arg-60, 87–90 (ERHY), Lys-98, 114–115 (RR), and 180–181 (GN). The active-site Tele-phosphohistidine intermediate is His-9. Glu-87 (proton donor/acceptor) is an active-site residue.

Belongs to the phosphoglycerate mutase family. BPG-dependent PGAM subfamily. As to quaternary structure, homodimer.

It catalyses the reaction (2R)-2-phosphoglycerate = (2R)-3-phosphoglycerate. It functions in the pathway carbohydrate degradation; glycolysis; pyruvate from D-glyceraldehyde 3-phosphate: step 3/5. Its function is as follows. Catalyzes the interconversion of 2-phosphoglycerate and 3-phosphoglycerate. The sequence is that of 2,3-bisphosphoglycerate-dependent phosphoglycerate mutase from Sphingopyxis alaskensis (strain DSM 13593 / LMG 18877 / RB2256) (Sphingomonas alaskensis).